The sequence spans 507 residues: Hippocampus abundant transcript-like protein 1 (507 aa).

Residues 1 to 27 (MSTDGESPEEPRWKAVASPKASTMPEK) are disordered. The Extracellular segment spans residues 1–51 (MSTDGESPEEPRWKAVASPKASTMPEKRGSAQAASGSWLQGFGHPSVYHAA). A helical transmembrane segment spans residues 52–72 (FVIFLEFFAWGLLTTPMLTVL). Residues 73 to 84 (HETFPQHTFLMN) lie on the Cytoplasmic side of the membrane. A helical transmembrane segment spans residues 85 to 105 (GLIQGVKGLLSFLSAPLIGAL). The Extracellular segment spans residues 106–113 (SDVWGRKP). Residues 114 to 134 (FLLGTVFFTCFPIPLMRINPW) form a helical membrane-spanning segment. At 135–136 (WY) the chain is on the cytoplasmic side. Residues 137 to 157 (FGMISVSGVFSVTFSVIFAYV) traverse the membrane as a helical segment. At 158–170 (ADFTQEHERSTAY) the chain is on the extracellular side. The helical transmembrane segment at 171–191 (GWVSATFAASLVSSPAIGTYL) threads the bilayer. Topologically, residues 192-198 (SANYGDS) are cytoplasmic. A helical transmembrane segment spans residues 199-219 (LVVLVATLVALLDICFILIAV). Residues 220-257 (PESLSEKIRPASWGAQISWKQADPFASLKKVGKDSTVL) are Extracellular-facing. A helical transmembrane segment spans residues 258–278 (LICITVFLSYLPEAGQYSSFF). Topologically, residues 279–283 (LYLRQ) are cytoplasmic. The helical transmembrane segment at 284 to 304 (VIGFGSVKIVAFIAMVGILSI) threads the bilayer. Topologically, residues 305–323 (VAQTVFLSKLMRSLGNKNT) are extracellular. Residues 324–344 (VLLGLGFQMLQLAWYGFGSQA) form a helical membrane-spanning segment. Residues 345 to 347 (WMM) lie on the Cytoplasmic side of the membrane. A helical membrane pass occupies residues 348–368 (WAAGTVAAMSSITFPAVSALI). Over 369–389 (SRNAESDQQGVAQGIVTGIRG) the chain is Extracellular. The chain crosses the membrane as a helical span at residues 390–410 (LCNGLGPALYGFIFYMFHVEL). Residues 411 to 430 (SELGPKLNSDDDPLQGAFIP) are Cytoplasmic-facing. The helical transmembrane segment at 431 to 451 (GPPFLFGACIVLMSFLVALFI) threads the bilayer. The Extracellular segment spans residues 452 to 507 (PEYRKTSGVQKHNNSTSGSLSTPPERGSDEDIEPLLQDSSIWELSFEEPGNQCTEL). A compositionally biased stretch (polar residues) spans 459 to 473 (GVQKHNNSTSGSLST). Positions 459 to 483 (GVQKHNNSTSGSLSTPPERGSDEDI) are disordered. 2 N-linked (GlcNAc...) asparagine glycosylation sites follow: asparagine 464 and asparagine 465.

Belongs to the major facilitator superfamily.

The protein localises to the membrane. This chain is Hippocampus abundant transcript-like protein 1, found in Mus musculus (Mouse).